A 147-amino-acid polypeptide reads, in one-letter code: Small ribosomal subunit protein uS5 (147 aa).

The S5 DRBM domain maps to 9-72 (FEEVVVNISR…DNAFKNITTV (64 aa)).

This sequence belongs to the universal ribosomal protein uS5 family. Part of the 30S ribosomal subunit. Contacts proteins S4 and S8.

In terms of biological role, with S4 and S12 plays an important role in translational accuracy. Located at the back of the 30S subunit body where it stabilizes the conformation of the head with respect to the body. The sequence is that of Small ribosomal subunit protein uS5 from Nitratiruptor sp. (strain SB155-2).